Consider the following 229-residue polypeptide: ATP synthase subunit a (229 aa).

6 helical membrane-spanning segments follow: residues 25 to 45 (ADAI…SMLA), 82 to 102 (FFPL…IGLV), 104 to 124 (GFFP…IVFV), 142 to 162 (FLGP…IGHF), 181 to 201 (LVLM…MMLM), and 202 to 222 (GVLV…IYIQ).

Belongs to the ATPase A chain family. In terms of assembly, F-type ATPases have 2 components, CF(1) - the catalytic core - and CF(0) - the membrane proton channel. CF(1) has five subunits: alpha(3), beta(3), gamma(1), delta(1), epsilon(1). CF(0) has three main subunits: a(1), b(2) and c(9-12). The alpha and beta chains form an alternating ring which encloses part of the gamma chain. CF(1) is attached to CF(0) by a central stalk formed by the gamma and epsilon chains, while a peripheral stalk is formed by the delta and b chains.

Its subcellular location is the cell inner membrane. In terms of biological role, key component of the proton channel; it plays a direct role in the translocation of protons across the membrane. The sequence is that of ATP synthase subunit a from Geotalea uraniireducens (strain Rf4) (Geobacter uraniireducens).